A 250-amino-acid polypeptide reads, in one-letter code: L-cystine transport system ATP-binding protein TcyN (250 aa).

Residues 4-244 (IEVKNLVKKF…PEQPRTRQFL (241 aa)) enclose the ABC transporter domain. Residue 36 to 43 (GPSGSGKT) participates in ATP binding.

Belongs to the ABC transporter superfamily. In terms of assembly, the complex is composed of two ATP-binding proteins (TcyN), two transmembrane proteins (TcyL) and a solute-binding protein (TcyJ).

The protein localises to the cell inner membrane. It catalyses the reaction L-cystine(out) + ATP + H2O = L-cystine(in) + ADP + phosphate + H(+). The enzyme catalyses D-cystine(out) + ATP + H2O = D-cystine(in) + ADP + phosphate + H(+). With respect to regulation, the TcyJLN system is inhibited by L-cystine, L-cysteine, DL-2,6-diaminopimelic acid and L-cystathionine, and is stimulated by D-cysteine. In terms of biological role, part of the ABC transporter complex TcyJLN involved in L-cystine import. This high affinity cystine transporter is involved in resistance to oxidative stress by forming a L-cysteine/L-cystine shuttle system with the EamA transporter, which exports L-cysteine as reducing equivalents to the periplasm to prevent the cells from oxidative stress. Exported L-cysteine can reduce the periplasmic hydrogen peroxide to water, and then generated L-cystine is imported back into the cytoplasm via the TcyJLN complex. Functions at low cystine concentrations. The system can also transport L-cysteine, diaminopimelic acid (DAP), djenkolate, lanthionine, D-cystine, homocystine, and it mediates accumulation of the toxic compounds L-selenaproline (SCA) and L-selenocystine (SeCys). Could also facilitate threonine efflux. Responsible for energy coupling to the transport system. In Escherichia coli (strain K12), this protein is L-cystine transport system ATP-binding protein TcyN.